The sequence spans 305 residues: Zinc transporter ZIP9 (305 aa).

A helical membrane pass occupies residues 7 to 27 (ICLLSLAMLVACYVAGIIPLA). Residue N29 is glycosylated (N-linked (GlcNAc...) asparagine). 5 consecutive transmembrane segments (helical) span residues 35-55 (LKLVTVLGAGLLCGTALAVIV), 104-124 (AYIGVSLVLGFVFMLLVDQIG), 144-164 (ITTTLGLVVHAAADGVALGAA), 174-194 (LIVFVAIMLHKAPAAFGLVSF), and 208-228 (HLLVFALAAPVMSMVTYLGLS). The N-linked (GlcNAc...) asparagine glycan is linked to N239. The next 2 helical transmembrane spans lie at 242–262 (GVAMLFSAGTFLYVATVHVLP) and 284–304 (LEVAALVLGCLIPLVLSIGHH).

The protein belongs to the ZIP transporter (TC 2.A.5) family.

The protein resides in the golgi apparatus. It is found in the trans-Golgi network membrane. It localises to the cell membrane. Its subcellular location is the cytoplasm. The protein localises to the perinuclear region. The protein resides in the mitochondrion. It is found in the nucleus. The catalysed reaction is Zn(2+)(in) = Zn(2+)(out). In terms of biological role, transports zinc ions across cell and organelle membranes into the cytoplasm and regulates intracellular zinc homeostasis. Participates in the zinc ions efflux out of the secretory compartments. Regulates intracellular zinc level, resulting in the enhancement of AKT1 and MAPK3/MAPK1 (Erk1/2) phosphorylation in response to the BCR activation. Also functions as a membrane androgen receptor that mediates, through a G protein, the non-classical androgen signaling pathway, characterized by the activation of MAPK3/MAPK1 (Erk1/2) and transcription factors CREB1 or ATF1. Moreover, has dual functions as a membrane-bound androgen receptor and as an androgen-dependent zinc transporter both of which are mediated through an inhibitory G protein (Gi) that mediates both MAP kinase and zinc signaling leading to the androgen-dependent apoptotic process. This Gallus gallus (Chicken) protein is Zinc transporter ZIP9.